Consider the following 307-residue polypeptide: Type 2A encapsulin shell protein (307 aa).

This sequence belongs to the encapsulin family. Family 2A subfamily. Homooligomeric. The encapsulin nanocompartment is formed by 60 subunits; monomers form pentamers which assemble to form shells. There are 12 charged pores where the pentamers meet as well as 3-fold axis channels and dimer channels. Post-translationally, the N-terminus is blocked.

The protein resides in the encapsulin nanocompartment. It is found in the cytoplasm. The protein localises to the cytosol. Its subcellular location is the cell membrane. In terms of biological role, shell component of a type 2A encapsulin nanocompartment. Forms encapsulin nanocompartments about 24 nm in diameter from 60 monomers. Probably encapsulates at least cysteine desulfurase (CyD, AC O32975) and allows passage of cysteine into its interior, probably involved in sulfur metabolism. Expression in M.smegmatis generates a multimeric protein, whereas expression in E.coli does not. The chain is Type 2A encapsulin shell protein from Mycobacterium leprae (strain TN).